The primary structure comprises 199 residues: 5'-deoxynucleotidase YfbR (199 aa).

Residues 18-19 (RW) and H33 contribute to the substrate site. The region spanning 30–142 (VSEHSLQVAM…VKQADALCAY (113 aa)) is the HD domain. The a divalent metal cation site is built by H33, H68, and D69. Substrate-binding positions include D69, 77 to 80 (DLPT), and D137. Position 137 (D137) interacts with a divalent metal cation.

It belongs to the 5DNU family. As to quaternary structure, homodimer. The cofactor is a divalent metal cation.

The protein localises to the cytoplasm. The catalysed reaction is a 2'-deoxyribonucleoside 5'-phosphate + H2O = a 2'-deoxyribonucleoside + phosphate. Its function is as follows. Catalyzes the strictly specific dephosphorylation of 2'-deoxyribonucleoside 5'-monophosphates. The protein is 5'-deoxynucleotidase YfbR of Escherichia coli (strain K12 / MC4100 / BW2952).